The following is a 707-amino-acid chain: Complement C1r-A subcomponent (707 aa).

A signal peptide spans 1-16 (MWLFALLVTLFYGVEG). A CUB 1 domain is found at 17–140 (SIYLPQKLYG…KGFLAYYQAV (124 aa)). Residues Glu-65, Asp-73, and Asp-118 each coordinate Ca(2+). Cys-70 and Cys-88 are disulfide-bonded. Asn-124 carries N-linked (GlcNAc...) asparagine glycosylation. Ca(2+) contacts are provided by Asp-141, Leu-142, and Glu-144. The region spanning 141-189 (DLDECASQPNSVEEGLQPRCQHLCHNYVGGYFCSCHPGYELQKDGQSCQ) is the EGF-like; calcium-binding domain. Cystine bridges form between Cys-145–Cys-164, Cys-160–Cys-173, Cys-175–Cys-188, and Cys-192–Cys-219. Residues Asn-166, Tyr-167, and Gly-170 each contribute to the Ca(2+) site. Residue Asn-166 is modified to (3R)-3-hydroxyasparagine. The region spanning 192–304 (CSSELYTEPS…RGWKLHYTTE (113 aa)) is the CUB 2 domain. The residue at position 205 (Ser-205) is a Phosphoserine; by CK2. Residue Asn-220 is glycosylated (N-linked (GlcNAc...) asparagine). Ca(2+) is bound by residues Asp-242, Asp-252, Asp-289, and Asp-293. Cys-249 and Cys-267 are oxidised to a cystine. 2 consecutive Sushi domains span residues 306–372 (IKCP…RCKI) and 373–448 (KNCG…RCLP). 5 disulfide bridges follow: Cys-308–Cys-357, Cys-337–Cys-370, Cys-375–Cys-428, Cys-405–Cys-446, and Cys-450–Cys-579. Residues 463–704 (IIRGQPARPG…YVDWIKKEMG (242 aa)) form the Peptidase S1 domain. Residues His-501 and Asp-559 each act as charge relay system in the active site. The N-linked (GlcNAc...) asparagine glycan is linked to Asn-583. Cystine bridges form between Cys-622–Cys-641 and Cys-652–Cys-682. Ser-656 (charge relay system) is an active-site residue.

Belongs to the peptidase S1 family. As to quaternary structure, core component of the complement C1 complex, a calcium-dependent complex composed of 1 molecule of the C1Q subcomplex, 2 molecules of C1R and 2 molecules of C1S. The C1Q subcomplex is composed 18 subunits: 3 chains of C1QA, C1QB, and C1QC trimerize to form 6 collagen-like triple helices connected to six globular ligand-recognition modules. Within the C1 complex, C1R is a dimer of identical chains, each of which is activated by cleavage into two chains, heavy and light, connected by disulfide bonds. Cleaved and activated by autocatalytic processing to generate Complement C1r subcomponent heavy and light chains that are connected by disulfide bonds. Post-translationally, the iron and 2-oxoglutarate dependent 3-hydroxylation of aspartate and asparagine is (R) stereospecific within EGF domains.

Its subcellular location is the secreted. The protein resides in the cell surface. The enzyme catalyses Selective cleavage of Lys(or Arg)-|-Ile bond in complement subcomponent C1s to form the active form of C1s (EC 3.4.21.42).. Activated by the C1Q subcomplex of the C1 complex following C1Q binding to immunoglobulins (IgG or IgM) complexed with antigens to form antigen-antibody complexes on the surface of pathogens. Immunoglobulin-binding promotes autoactivation of C1R, which results in the cleavage of the Arg-Ile bond in the catalytic domain. Its function is as follows. Serine protease component of the complement C1 complex, a multiprotein complex that initiates the classical pathway of the complement system, a cascade of proteins that leads to phagocytosis and breakdown of pathogens and signaling that strengthens the adaptive immune system. C1R catalyzes the first enzymatic step in the classical complement pathway: it is activated by the C1Q subcomplex of the C1 complex, which associates with IgG or IgM immunoglobulins complexed with antigens to form antigen-antibody complexes on the surface of pathogens. Immunoglobulin-binding promotes the autocatalytic cleavage and activation of C1R. Activated C1R then cleaves and activates C1S, the second protease of the classical complement pathway. It is unclear if C1R activates C1S within single, strained C1 complexes or between neighboring C1 complexes on surfaces. The protein is Complement C1r-A subcomponent (C1ra) of Mus musculus (Mouse).